The following is a 282-amino-acid chain: Pantothenate synthetase (282 aa).

30–37 provides a ligand contact to ATP; that stretch reads MGALHAGH. The active-site Proton donor is His-37. Position 61 (Gln-61) interacts with (R)-pantoate. Gln-61 serves as a coordination point for beta-alanine. An ATP-binding site is contributed by 147–150; sequence GEKD. Gln-153 is a binding site for (R)-pantoate. Residues Val-176 and 184–187 each bind ATP; that span reads LSSR.

Belongs to the pantothenate synthetase family. In terms of assembly, homodimer.

The protein localises to the cytoplasm. It catalyses the reaction (R)-pantoate + beta-alanine + ATP = (R)-pantothenate + AMP + diphosphate + H(+). Its pathway is cofactor biosynthesis; (R)-pantothenate biosynthesis; (R)-pantothenate from (R)-pantoate and beta-alanine: step 1/1. Functionally, catalyzes the condensation of pantoate with beta-alanine in an ATP-dependent reaction via a pantoyl-adenylate intermediate. This is Pantothenate synthetase from Bacteroides fragilis (strain YCH46).